The following is a 397-amino-acid chain: Succinate--CoA ligase [ADP-forming] subunit beta (397 aa).

The 246-residue stretch at 9–254 (KALLKSFGAP…ETEQDAKELE (246 aa)) folds into the ATP-grasp domain. Residues K46, 53–55 (GRG), E109, A112, and E117 contribute to the ATP site. Residues N209 and D223 each coordinate Mg(2+). Substrate is bound by residues N274 and 331 to 333 (GIM).

This sequence belongs to the succinate/malate CoA ligase beta subunit family. In terms of assembly, heterotetramer of two alpha and two beta subunits. Mg(2+) serves as cofactor.

It catalyses the reaction succinate + ATP + CoA = succinyl-CoA + ADP + phosphate. It carries out the reaction GTP + succinate + CoA = succinyl-CoA + GDP + phosphate. It functions in the pathway carbohydrate metabolism; tricarboxylic acid cycle; succinate from succinyl-CoA (ligase route): step 1/1. In terms of biological role, succinyl-CoA synthetase functions in the citric acid cycle (TCA), coupling the hydrolysis of succinyl-CoA to the synthesis of either ATP or GTP and thus represents the only step of substrate-level phosphorylation in the TCA. The beta subunit provides nucleotide specificity of the enzyme and binds the substrate succinate, while the binding sites for coenzyme A and phosphate are found in the alpha subunit. This is Succinate--CoA ligase [ADP-forming] subunit beta from Hyphomonas neptunium (strain ATCC 15444).